We begin with the raw amino-acid sequence, 140 residues long: ATP synthase epsilon chain (140 aa).

This sequence belongs to the ATPase epsilon chain family. F-type ATPases have 2 components, CF(1) - the catalytic core - and CF(0) - the membrane proton channel. CF(1) has five subunits: alpha(3), beta(3), gamma(1), delta(1), epsilon(1). CF(0) has three main subunits: a, b and c.

The protein localises to the cell inner membrane. In terms of biological role, produces ATP from ADP in the presence of a proton gradient across the membrane. This chain is ATP synthase epsilon chain, found in Chromobacterium violaceum (strain ATCC 12472 / DSM 30191 / JCM 1249 / CCUG 213 / NBRC 12614 / NCIMB 9131 / NCTC 9757 / MK).